Consider the following 239-residue polypeptide: Ribonuclease 3 (239 aa).

Residues 12-137 (RAKLESLIGH…LIAAIYLDGG (126 aa)) enclose the RNase III domain. Residue glutamate 50 participates in Mg(2+) binding. Aspartate 54 is an active-site residue. Mg(2+) contacts are provided by aspartate 123 and glutamate 126. Glutamate 126 is a catalytic residue. Positions 162 to 231 (DAKTELQEWS…ATKMLEREGI (70 aa)) constitute a DRBM domain.

Belongs to the ribonuclease III family. Homodimer. It depends on Mg(2+) as a cofactor.

Its subcellular location is the cytoplasm. It catalyses the reaction Endonucleolytic cleavage to 5'-phosphomonoester.. Functionally, digests double-stranded RNA. Involved in the processing of primary rRNA transcript to yield the immediate precursors to the large and small rRNAs (23S and 16S). Processes some mRNAs, and tRNAs when they are encoded in the rRNA operon. Processes pre-crRNA and tracrRNA of type II CRISPR loci if present in the organism. This Rhizobium etli (strain CIAT 652) protein is Ribonuclease 3.